The sequence spans 132 residues: MAAGMKGKRSRRRKERKNVEHGCAHIKSTFNNSIVTITDSVGNTLSWASAGGLGFRGSRKSTPFAAQMAAETAAKTAMEHGLKSIEVYVKGPGSGREAAIRSLQAAGLEVTLIKDVTPIPHNGCRPPKRRRV.

Residues 1–16 are compositionally biased toward basic residues; it reads MAAGMKGKRSRRRKER. Residues 1 to 20 form a disordered region; sequence MAAGMKGKRSRRRKERKNVE.

Belongs to the universal ribosomal protein uS11 family. As to quaternary structure, part of the 30S ribosomal subunit. Interacts with proteins S7 and S18. Binds to IF-3.

Functionally, located on the platform of the 30S subunit, it bridges several disparate RNA helices of the 16S rRNA. Forms part of the Shine-Dalgarno cleft in the 70S ribosome. The polypeptide is Small ribosomal subunit protein uS11 (Clostridium botulinum (strain Loch Maree / Type A3)).